The following is a 208-amino-acid chain: Protein-L-isoaspartate O-methyltransferase (208 aa).

Ser59 is a catalytic residue.

This sequence belongs to the methyltransferase superfamily. L-isoaspartyl/D-aspartyl protein methyltransferase family.

The protein resides in the cytoplasm. It catalyses the reaction [protein]-L-isoaspartate + S-adenosyl-L-methionine = [protein]-L-isoaspartate alpha-methyl ester + S-adenosyl-L-homocysteine. Functionally, catalyzes the methyl esterification of L-isoaspartyl residues in peptides and proteins that result from spontaneous decomposition of normal L-aspartyl and L-asparaginyl residues. It plays a role in the repair and/or degradation of damaged proteins. The sequence is that of Protein-L-isoaspartate O-methyltransferase from Yersinia pseudotuberculosis serotype O:1b (strain IP 31758).